The primary structure comprises 184 residues: Adenine phosphoribosyltransferase (184 aa).

This sequence belongs to the purine/pyrimidine phosphoribosyltransferase family. In terms of assembly, homodimer.

Its subcellular location is the cytoplasm. It catalyses the reaction AMP + diphosphate = 5-phospho-alpha-D-ribose 1-diphosphate + adenine. Its pathway is purine metabolism; AMP biosynthesis via salvage pathway; AMP from adenine: step 1/1. In terms of biological role, catalyzes a salvage reaction resulting in the formation of AMP, that is energically less costly than de novo synthesis. The sequence is that of Adenine phosphoribosyltransferase from Shewanella baltica (strain OS223).